The primary structure comprises 121 residues: uncharacterized protein (121 aa).

This is an uncharacterized protein from Caenorhabditis elegans.